The following is a 311-amino-acid chain: Taste receptor type 2 member 9 (311 aa).

The Extracellular portion of the chain corresponds to 1–9; it reads MPSTIEAIY. The helical transmembrane segment at 10 to 32 threads the bilayer; the sequence is IILIAGELTIGIWGNGFIVLVNC. The Cytoplasmic portion of the chain corresponds to 33 to 52; it reads IDWLKRRDVSLIDIILISLA. Residues 53 to 72 traverse the membrane as a helical segment; the sequence is ISRICLLCVISLDGFFILLF. The Extracellular segment spans residues 73–86; it reads PGTYDINVLESIMD. A helical transmembrane segment spans residues 87 to 109; sequence AVWTFANNSSLWFTSCLSIFYLL. Topologically, residues 110–128 are cytoplasmic; the sequence is KIANISHPFFFWLKLKINK. A helical transmembrane segment spans residues 129 to 146; that stretch reads VILAILLGSFLISLIISF. Over 147 to 179 the chain is Extracellular; it reads PINGXWYHLFKVSHEENITWAFKVSTIPGAFKQ. Asparagine 163 carries an N-linked (GlcNAc...) asparagine glycan. The helical transmembrane segment at 180-202 threads the bilayer; the sequence is LTLNLGAMVPFMLCLISFFLLLF. Residues 203–233 lie on the Cytoplasmic side of the membrane; it reads SLVRHTKQIQLHATGLRDPSTEAHMRAIKAV. Residues 234–256 form a helical membrane-spanning segment; sequence IIFLLLLIVYYPVFLVMTSSTLI. Over 257 to 260 the chain is Extracellular; it reads PQGK. The chain crosses the membrane as a helical span at residues 261–283; sequence LVLMIGDIVTVIFPSSHSFILIM. Over 284-311 the chain is Cytoplasmic; that stretch reads GNSKLREAFLKMLRFVKGFLRRRKPFGP.

This sequence belongs to the G-protein coupled receptor T2R family.

The protein resides in the membrane. Gustducin-coupled receptor implicated in the perception of bitter compounds in the oral cavity and the gastrointestinal tract. Signals through PLCB2 and the calcium-regulated cation channel TRPM5. The protein is Taste receptor type 2 member 9 (TAS2R9) of Papio hamadryas (Hamadryas baboon).